We begin with the raw amino-acid sequence, 513 residues long: Maturase K (513 aa).

This sequence belongs to the intron maturase 2 family. MatK subfamily.

Its subcellular location is the plastid. It is found in the chloroplast. Functionally, usually encoded in the trnK tRNA gene intron. Probably assists in splicing its own and other chloroplast group II introns. This Arundo donax (Giant reed) protein is Maturase K.